A 1353-amino-acid polypeptide reads, in one-letter code: Protein timeless homolog (1353 aa).

Disordered regions lie at residues 798–825 (VAEDRAEDPDEEDPAEPYDSEQEEEEEV), 1150–1291 (KPTR…LEED), and 1306–1335 (GGSIAGNGITETRRDTSEEREDDDDEDPFT). Residues 802-825 (RAEDPDEEDPAEPYDSEQEEEEEV) show a composition bias toward acidic residues. 2 stretches are compositionally biased toward basic and acidic residues: residues 1150–1160 (KPTRQVERHLE) and 1168–1182 (ERSKKSEKNGKKFDD). Acidic residues-rich tracts occupy residues 1183–1206 (FLNDDDDDSENDVGGGSEDDEEEE) and 1217–1226 (DSEDEEEHIE). The segment covering 1227-1239 (QEEAQKKLEKVAE) has biased composition (basic and acidic residues). 3 stretches are compositionally biased toward acidic residues: residues 1261-1273 (DSSDESDDDDSAE), 1282-1291 (AEDDSDLEED), and 1323-1332 (EEREDDDDED).

The protein belongs to the timeless family. As to quaternary structure, associates with the cohesin complex. Interacts with smc-1, smc-3, scc-1 and scc-3.

The protein resides in the nucleus. Its function is as follows. Plays an important role in chromosome cohesion during both mitosis and meiosis. In prophase of meiosis, it is involved in the formation of the synaptonemal complex (SC) and specifically, in the diplotene and diakinesis phases of prophase, it stabilizes the association of homologous chromosomes during synapsis and sister chromatid cohesion. It regulates cohesin subunits to promote meiotic chromosome cohesion and localizes non-SMC (structural maintenance of chromosome) cohesin subunits to chromatin prior to or during pre-meiotic S phase. Implicated in influencing either the stability or loading of meiotic-specific cohesin subunit, rec8. Controls cell cycle exit and cell fusion to prevent the premature differentiation into adult cells. Specifically, regulates hypodermal seam cell identity. The protein is Protein timeless homolog of Caenorhabditis elegans.